The chain runs to 380 residues: Putative 8-amino-7-oxononanoate synthase (380 aa).

Arg-18 contacts substrate. Pyridoxal 5'-phosphate is bound at residue 106–107 (GY). Residue His-131 participates in substrate binding. Residues Ser-179, 205–208 (DEAH), and 236–239 (TFGK) contribute to the pyridoxal 5'-phosphate site. At Lys-239 the chain carries N6-(pyridoxal phosphate)lysine. A substrate-binding site is contributed by Thr-352.

The protein belongs to the class-II pyridoxal-phosphate-dependent aminotransferase family. BioF subfamily. As to quaternary structure, homodimer. The cofactor is pyridoxal 5'-phosphate.

The catalysed reaction is 6-carboxyhexanoyl-[ACP] + L-alanine + H(+) = (8S)-8-amino-7-oxononanoate + holo-[ACP] + CO2. It participates in cofactor biosynthesis; biotin biosynthesis. In terms of biological role, catalyzes the decarboxylative condensation of pimeloyl-[acyl-carrier protein] and L-alanine to produce 8-amino-7-oxononanoate (AON), [acyl-carrier protein], and carbon dioxide. The protein is Putative 8-amino-7-oxononanoate synthase (bioF) of Neisseria meningitidis serogroup B (strain ATCC BAA-335 / MC58).